The following is a 313-amino-acid chain: tRNA-cytidine(32) 2-sulfurtransferase (313 aa).

Residues 60–65 (SGGKDS) carry the PP-loop motif motif. [4Fe-4S] cluster contacts are provided by Cys135, Cys138, and Cys226.

The protein belongs to the TtcA family. Homodimer. Mg(2+) serves as cofactor. Requires [4Fe-4S] cluster as cofactor.

Its subcellular location is the cytoplasm. The enzyme catalyses cytidine(32) in tRNA + S-sulfanyl-L-cysteinyl-[cysteine desulfurase] + AH2 + ATP = 2-thiocytidine(32) in tRNA + L-cysteinyl-[cysteine desulfurase] + A + AMP + diphosphate + H(+). It participates in tRNA modification. Functionally, catalyzes the ATP-dependent 2-thiolation of cytidine in position 32 of tRNA, to form 2-thiocytidine (s(2)C32). The sulfur atoms are provided by the cysteine/cysteine desulfurase (IscS) system. The sequence is that of tRNA-cytidine(32) 2-sulfurtransferase from Delftia acidovorans (strain DSM 14801 / SPH-1).